Consider the following 481-residue polypeptide: Aspartyl/glutamyl-tRNA(Asn/Gln) amidotransferase subunit B (481 aa).

Belongs to the GatB/GatE family. GatB subfamily. In terms of assembly, heterotrimer of A, B and C subunits.

The catalysed reaction is L-glutamyl-tRNA(Gln) + L-glutamine + ATP + H2O = L-glutaminyl-tRNA(Gln) + L-glutamate + ADP + phosphate + H(+). It catalyses the reaction L-aspartyl-tRNA(Asn) + L-glutamine + ATP + H2O = L-asparaginyl-tRNA(Asn) + L-glutamate + ADP + phosphate + 2 H(+). In terms of biological role, allows the formation of correctly charged Asn-tRNA(Asn) or Gln-tRNA(Gln) through the transamidation of misacylated Asp-tRNA(Asn) or Glu-tRNA(Gln) in organisms which lack either or both of asparaginyl-tRNA or glutaminyl-tRNA synthetases. The reaction takes place in the presence of glutamine and ATP through an activated phospho-Asp-tRNA(Asn) or phospho-Glu-tRNA(Gln). This Pseudomonas putida (strain ATCC 700007 / DSM 6899 / JCM 31910 / BCRC 17059 / LMG 24140 / F1) protein is Aspartyl/glutamyl-tRNA(Asn/Gln) amidotransferase subunit B.